A 336-amino-acid polypeptide reads, in one-letter code: Flavonoid 4'-O-methyltransferase 3 (336 aa).

Residues Y140 and D203 each contribute to the S-adenosyl-L-methionine site. Residue H241 is the Proton acceptor of the active site.

Belongs to the class I-like SAM-binding methyltransferase superfamily. Cation-independent O-methyltransferase family. In terms of assembly, homodimer. Expressed in leaves.

It catalyses the reaction scutellarein 7-methyl ether + S-adenosyl-L-methionine = ladanein + S-adenosyl-L-homocysteine + H(+). It carries out the reaction cirsimaritin + S-adenosyl-L-methionine = salvigenin + S-adenosyl-L-homocysteine + H(+). The enzyme catalyses cirsiliol + S-adenosyl-L-methionine = eupatorin + S-adenosyl-L-homocysteine + H(+). The catalysed reaction is genkwanin + S-adenosyl-L-methionine = apigenin 4',7-dimethyl ether + S-adenosyl-L-homocysteine. It participates in flavonoid metabolism. Its activity is regulated as follows. Substrate inhibition by genkwanin (GENK) at concentrations above 2.5 mM. In terms of biological role, flavonoid 4'-O-methyltransferase involved in the biosynthesis of polymethoxylated flavonoids natural products such as nevadensin and salvigenin, aroma compounds which contribute to the flavor of sweet basil, and exhibit pharmacological activities such as anti-allergic, anti-oxidant, antibacterial, anti-proliferative, and anti-inflammatory effects. Catalyzes S-adenosylmethionine-dependent regioselective 4'-O-methylation of flavonoids; active on various hydroxylated flavonoid substrates, including scutellarein-7-methyl ether (SCU7Me) and cirsimaritin (CIRM), and, with a lower efficiency, hispidulin, ladanein (LAD), cirsioliol (CIRL) and genkwanin (GENK). This Ocimum basilicum (Sweet basil) protein is Flavonoid 4'-O-methyltransferase 3.